The primary structure comprises 965 residues: Isoleucine--tRNA ligase (965 aa).

Positions 68-78 match the 'HIGH' region motif; that stretch reads PYANGSLHMGH. Glu-582 serves as a coordination point for L-isoleucyl-5'-AMP. The 'KMSKS' region motif lies at 623-627; it reads KMSKS. An ATP-binding site is contributed by Lys-626. The Zn(2+) site is built by Cys-936, Cys-939, Cys-956, and Cys-959.

Belongs to the class-I aminoacyl-tRNA synthetase family. IleS type 1 subfamily. As to quaternary structure, monomer. The cofactor is Zn(2+).

The protein resides in the cytoplasm. The catalysed reaction is tRNA(Ile) + L-isoleucine + ATP = L-isoleucyl-tRNA(Ile) + AMP + diphosphate. In terms of biological role, catalyzes the attachment of isoleucine to tRNA(Ile). As IleRS can inadvertently accommodate and process structurally similar amino acids such as valine, to avoid such errors it has two additional distinct tRNA(Ile)-dependent editing activities. One activity is designated as 'pretransfer' editing and involves the hydrolysis of activated Val-AMP. The other activity is designated 'posttransfer' editing and involves deacylation of mischarged Val-tRNA(Ile). The sequence is that of Isoleucine--tRNA ligase from Prochlorococcus marinus (strain MIT 9515).